The primary structure comprises 385 residues: Dual-specificity RNA methyltransferase RlmN (385 aa).

The active-site Proton acceptor is Glu-113. In terms of domain architecture, Radical SAM core spans 120–352 (VGRAGALCVS…NRAGYASPIR (233 aa)). Residues Cys-127 and Cys-363 are joined by a disulfide bond. Residues Cys-134, Cys-138, and Cys-141 each contribute to the [4Fe-4S] cluster site. Residues 189–190 (GE), Ser-221, 243–245 (SLH), and Asn-320 contribute to the S-adenosyl-L-methionine site. Residue Cys-363 is the S-methylcysteine intermediate of the active site.

The protein belongs to the radical SAM superfamily. RlmN family. [4Fe-4S] cluster serves as cofactor.

The protein localises to the cytoplasm. It carries out the reaction adenosine(2503) in 23S rRNA + 2 reduced [2Fe-2S]-[ferredoxin] + 2 S-adenosyl-L-methionine = 2-methyladenosine(2503) in 23S rRNA + 5'-deoxyadenosine + L-methionine + 2 oxidized [2Fe-2S]-[ferredoxin] + S-adenosyl-L-homocysteine. The enzyme catalyses adenosine(37) in tRNA + 2 reduced [2Fe-2S]-[ferredoxin] + 2 S-adenosyl-L-methionine = 2-methyladenosine(37) in tRNA + 5'-deoxyadenosine + L-methionine + 2 oxidized [2Fe-2S]-[ferredoxin] + S-adenosyl-L-homocysteine. Functionally, specifically methylates position 2 of adenine 2503 in 23S rRNA and position 2 of adenine 37 in tRNAs. m2A2503 modification seems to play a crucial role in the proofreading step occurring at the peptidyl transferase center and thus would serve to optimize ribosomal fidelity. This chain is Dual-specificity RNA methyltransferase RlmN, found in Phenylobacterium zucineum (strain HLK1).